The primary structure comprises 239 residues: DNA repair protein RecO (239 aa).

It belongs to the RecO family.

Its function is as follows. Involved in DNA repair and RecF pathway recombination. This is DNA repair protein RecO from Stenotrophomonas maltophilia (strain R551-3).